Reading from the N-terminus, the 348-residue chain is Dihydroorotase (348 aa).

Residues His17 and His19 each contribute to the Zn(2+) site. Residues 19 to 21 (HLR) and Asn45 contribute to the substrate site. The Zn(2+) site is built by Lys103, His140, and His178. Lys103 carries the N6-carboxylysine modification. His140 serves as a coordination point for substrate. Leu223 contributes to the substrate binding site. Asp251 is a binding site for Zn(2+). Residue Asp251 is part of the active site. Substrate is bound by residues His255 and Ala267.

Belongs to the metallo-dependent hydrolases superfamily. DHOase family. Class II DHOase subfamily. In terms of assembly, homodimer. The cofactor is Zn(2+).

The enzyme catalyses (S)-dihydroorotate + H2O = N-carbamoyl-L-aspartate + H(+). It participates in pyrimidine metabolism; UMP biosynthesis via de novo pathway; (S)-dihydroorotate from bicarbonate: step 3/3. Functionally, catalyzes the reversible cyclization of carbamoyl aspartate to dihydroorotate. This Salmonella agona (strain SL483) protein is Dihydroorotase.